We begin with the raw amino-acid sequence, 766 residues long: Phosphoribosylformylglycinamidine synthase subunit PurL (766 aa).

His49 is a catalytic residue. Tyr52 and Lys91 together coordinate ATP. Mg(2+) is bound at residue Glu93. Substrate-binding positions include 94–97 and Arg116; that span reads SHNH. His95 serves as the catalytic Proton acceptor. Asp117 serves as a coordination point for Mg(2+). Gln240 is a binding site for substrate. Position 268 (Asp268) interacts with Mg(2+). 312 to 314 is a binding site for substrate; the sequence is ESQ. The ATP site is built by Asp508 and Gly545. Asn546 is a binding site for Mg(2+). Ser548 is a binding site for substrate.

It belongs to the FGAMS family. As to quaternary structure, monomer. Part of the FGAM synthase complex composed of 1 PurL, 1 PurQ and 2 PurS subunits.

It is found in the cytoplasm. It carries out the reaction N(2)-formyl-N(1)-(5-phospho-beta-D-ribosyl)glycinamide + L-glutamine + ATP + H2O = 2-formamido-N(1)-(5-O-phospho-beta-D-ribosyl)acetamidine + L-glutamate + ADP + phosphate + H(+). It participates in purine metabolism; IMP biosynthesis via de novo pathway; 5-amino-1-(5-phospho-D-ribosyl)imidazole from N(2)-formyl-N(1)-(5-phospho-D-ribosyl)glycinamide: step 1/2. Its function is as follows. Part of the phosphoribosylformylglycinamidine synthase complex involved in the purines biosynthetic pathway. Catalyzes the ATP-dependent conversion of formylglycinamide ribonucleotide (FGAR) and glutamine to yield formylglycinamidine ribonucleotide (FGAM) and glutamate. The FGAM synthase complex is composed of three subunits. PurQ produces an ammonia molecule by converting glutamine to glutamate. PurL transfers the ammonia molecule to FGAR to form FGAM in an ATP-dependent manner. PurS interacts with PurQ and PurL and is thought to assist in the transfer of the ammonia molecule from PurQ to PurL. This is Phosphoribosylformylglycinamidine synthase subunit PurL from Synechococcus sp. (strain CC9902).